We begin with the raw amino-acid sequence, 227 residues long: General transcription factor 3C polypeptide 6 (227 aa).

Residues 157–227 (DEAAGPASDK…DGNVSQNNQS (71 aa)) are disordered. The span at 186–195 (EQEKVEHSEV) shows a compositional bias: basic and acidic residues. The span at 203–227 (ETPSEMESSVFMGTQDGNVSQNNQS) shows a compositional bias: polar residues.

Belongs to the TFIIIC subunit 6 family. Part of the TFIIIC subcomplex TFIIIC2, consisting of six subunits, GTF3C1, GTF3C2, GTF3C3, GTF3C4, GTF3C5 and GTF3C6. Interacts with GTF3C4 and GTF3C5.

Its subcellular location is the nucleus. Its function is as follows. Involved in RNA polymerase III-mediated transcription. Integral, tightly associated component of the DNA-binding TFIIIC2 subcomplex that directly binds tRNA and virus-associated RNA promoters. This chain is General transcription factor 3C polypeptide 6, found in Mus musculus (Mouse).